Here is a 219-residue protein sequence, read N- to C-terminus: Vesicle-associated membrane protein 712 (219 aa).

At Met-1–Lys-189 the chain is on the cytoplasmic side. The Longin domain occupies Leu-7–Leu-111. The v-SNARE coiled-coil homology domain maps to Thr-126 to Arg-186. The chain crosses the membrane as a helical; Anchor for type IV membrane protein span at residues Leu-190 to Cys-210. The Vesicular segment spans residues His-211–Val-219.

This sequence belongs to the synaptobrevin family. Expressed in flowers, leaves, stems and roots.

Its subcellular location is the vacuole membrane. The protein localises to the prevacuolar compartment membrane. Involved in the targeting and/or fusion of transport vesicles to their target membrane. This chain is Vesicle-associated membrane protein 712, found in Arabidopsis thaliana (Mouse-ear cress).